A 457-amino-acid chain; its full sequence is Oxysterol-binding protein-related protein 3C (457 aa).

2 disordered regions span residues 37-61 and 363-393; these read NEGVEVINPEGGKEDAEEEAQKGRW and QGDLSKAGSEKHSLEERQRAEKRTRETKGQK. 2 stretches are compositionally biased toward basic and acidic residues: residues 47–61 and 370–391; these read GGKEDAEEEAQKGRW and GSEKHSLEERQRAEKRTRETKG.

It belongs to the OSBP family. In terms of tissue distribution, expressed in roots, leaves, stems and flowers.

Its function is as follows. May be involved in the transport of sterols. The polypeptide is Oxysterol-binding protein-related protein 3C (ORP3C) (Arabidopsis thaliana (Mouse-ear cress)).